Here is a 379-residue protein sequence, read N- to C-terminus: Queuine tRNA-ribosyltransferase (379 aa).

D94 functions as the Proton acceptor in the catalytic mechanism. Substrate contacts are provided by residues 94–98, D148, Q191, and G218; that span reads DSGGF. The tract at residues 249 to 255 is RNA binding; the sequence is GVGSPDS. The active-site Nucleophile is the D268. The segment at 273 to 277 is RNA binding; important for wobble base 34 recognition; it reads TRIGR. Residues C306, C308, C311, and H337 each coordinate Zn(2+).

This sequence belongs to the queuine tRNA-ribosyltransferase family. As to quaternary structure, homodimer. Within each dimer, one monomer is responsible for RNA recognition and catalysis, while the other monomer binds to the replacement base PreQ1. It depends on Zn(2+) as a cofactor.

The catalysed reaction is 7-aminomethyl-7-carbaguanine + guanosine(34) in tRNA = 7-aminomethyl-7-carbaguanosine(34) in tRNA + guanine. Its pathway is tRNA modification; tRNA-queuosine biosynthesis. Catalyzes the base-exchange of a guanine (G) residue with the queuine precursor 7-aminomethyl-7-deazaguanine (PreQ1) at position 34 (anticodon wobble position) in tRNAs with GU(N) anticodons (tRNA-Asp, -Asn, -His and -Tyr). Catalysis occurs through a double-displacement mechanism. The nucleophile active site attacks the C1' of nucleotide 34 to detach the guanine base from the RNA, forming a covalent enzyme-RNA intermediate. The proton acceptor active site deprotonates the incoming PreQ1, allowing a nucleophilic attack on the C1' of the ribose to form the product. After dissociation, two additional enzymatic reactions on the tRNA convert PreQ1 to queuine (Q), resulting in the hypermodified nucleoside queuosine (7-(((4,5-cis-dihydroxy-2-cyclopenten-1-yl)amino)methyl)-7-deazaguanosine). The protein is Queuine tRNA-ribosyltransferase of Anoxybacillus flavithermus (strain DSM 21510 / WK1).